Here is a 176-residue protein sequence, read N- to C-terminus: ATP-dependent protease subunit HslV (176 aa).

T5 is a catalytic residue. G161, C164, and T167 together coordinate Na(+).

This sequence belongs to the peptidase T1B family. HslV subfamily. As to quaternary structure, a double ring-shaped homohexamer of HslV is capped on each side by a ring-shaped HslU homohexamer. The assembly of the HslU/HslV complex is dependent on binding of ATP.

It localises to the cytoplasm. It carries out the reaction ATP-dependent cleavage of peptide bonds with broad specificity.. Allosterically activated by HslU binding. Its function is as follows. Protease subunit of a proteasome-like degradation complex believed to be a general protein degrading machinery. The chain is ATP-dependent protease subunit HslV from Wolinella succinogenes (strain ATCC 29543 / DSM 1740 / CCUG 13145 / JCM 31913 / LMG 7466 / NCTC 11488 / FDC 602W) (Vibrio succinogenes).